Consider the following 127-residue polypeptide: SH2 domain-containing protein 1A (127 aa).

The SH2 domain maps to 6-102 (VYHGKISRET…GIVIPLQYPV (97 aa)). An interaction with FYN SH3 domain region spans residues 67–92 (ETAPGVHKRYFRKIKNLISAFQKPDQ). K89 carries the post-translational modification N6-acetyllysine. The tract at residues 104-127 (KSSPRSTQGTTGIREDPDVCLKAP) is disordered. A compositionally biased stretch (basic and acidic residues) spans 116–127 (IREDPDVCLKAP).

As to quaternary structure, interacts with CD84, CD244, LY9, SLAMF1 and FYN. Interacts with NTRK1, NTRK2 and NTRK3.

It is found in the cytoplasm. Its function is as follows. Cytoplasmic adapter regulating receptors of the signaling lymphocytic activation molecule (SLAM) family such as SLAMF1, CD244, LY9, CD84, SLAMF6 and SLAMF7. In SLAM signaling seems to cooperate with SH2D1B/EAT-2. Initially it has been proposed that association with SLAMF1 prevents SLAMF1 binding to inhibitory effectors including INPP5D/SHIP1 and PTPN11/SHP-2. However, by simultaneous interactions, recruits FYN which subsequently phosphorylates and activates SLAMF1. Positively regulates CD244/2B4- and CD84-mediated natural killer (NK) cell functions. Can also promote CD48-, SLAMF6 -, LY9-, and SLAMF7-mediated NK cell activation. In the context of NK cell-mediated cytotoxicity enhances conjugate formation with target cells. May also regulate the activity of the neurotrophin receptors NTRK1, NTRK2 and NTRK3. This is SH2 domain-containing protein 1A (SH2D1A) from Saguinus oedipus (Cotton-top tamarin).